A 29-amino-acid polypeptide reads, in one-letter code: Cyclotide mela-7 (29 aa).

The segment at residues 1 to 29 (GLPTCGETCFKGKCYTPGCSCSYPICKKN) is a cross-link (cyclopeptide (Gly-Asn)). 3 disulfides stabilise this stretch: Cys-5–Cys-19, Cys-9–Cys-21, and Cys-14–Cys-26.

In terms of processing, this is a cyclic peptide. Contains 3 disulfide bonds.

Its function is as follows. Probably participates in a plant defense mechanism (Potential). Binds to and induces leakage in phospholipd membranes, particularly ones containing 1-palmitoyl-2-oleophosphatidylethanolamine (POPE). In vitro, displays cytotoxicity against cultured cells but no hemolytic activity towards fresh erythrocytes. Not active against Gram-negative bacterium E.coli ATCC 25922 or Gram-positive bacterium S.aureus ATCC 25923 up to a concentration of 64 uM. The sequence is that of Cyclotide mela-7 from Melicytus latifolius (Norfolk Island mahoe).